Here is a 622-residue protein sequence, read N- to C-terminus: Chaperone protein HscA homolog (622 aa).

The protein belongs to the heat shock protein 70 family.

In terms of biological role, chaperone involved in the maturation of iron-sulfur cluster-containing proteins. Has a low intrinsic ATPase activity which is markedly stimulated by HscB. The polypeptide is Chaperone protein HscA homolog (Acidovorax ebreus (strain TPSY) (Diaphorobacter sp. (strain TPSY))).